A 97-amino-acid chain; its full sequence is Large ribosomal subunit protein eL21 (97 aa).

This sequence belongs to the eukaryotic ribosomal protein eL21 family.

This Methanococcus aeolicus (strain ATCC BAA-1280 / DSM 17508 / OCM 812 / Nankai-3) protein is Large ribosomal subunit protein eL21.